The primary structure comprises 199 residues: LexA repressor (199 aa).

The segment at residues 28–47 is a DNA-binding region (H-T-H motif); the sequence is IRDIAKHFKLTPRGAHIHVI. Residues S120 and K157 each act as for autocatalytic cleavage activity in the active site.

Belongs to the peptidase S24 family. In terms of assembly, homodimer.

It catalyses the reaction Hydrolysis of Ala-|-Gly bond in repressor LexA.. In terms of biological role, represses a number of genes involved in the response to DNA damage (SOS response), including recA and lexA. In the presence of single-stranded DNA, RecA interacts with LexA causing an autocatalytic cleavage which disrupts the DNA-binding part of LexA, leading to derepression of the SOS regulon and eventually DNA repair. This is LexA repressor from Thermosipho melanesiensis (strain DSM 12029 / CIP 104789 / BI429).